Consider the following 483-residue polypeptide: Cytochrome P450 monooxygenase stcF (483 aa).

Cys-424 serves as a coordination point for heme.

The protein belongs to the cytochrome P450 family. It depends on heme as a cofactor.

It functions in the pathway mycotoxin biosynthesis; sterigmatocystin biosynthesis. Cytochrome P450 monooxygenase; part of the gene cluster that mediates the biosynthesis of sterigmatocystin (ST), a polyketide-derived furanocoumarin which is part of the most toxic and carcinogenic compounds among the known mycotoxins. The first step in the biosynthesis of sterigmatocystin is the production of hexanoate by the fatty acid synthase (FAS) units stcJ and stcK. The polyketide backbone is assembled by the non-reducing polyketide synthase stcA by condensation of the starter hexanoyl-CoA and 7 malonyl-CoA extender units followed by cyclization and release of norsolorinic acid. Norsolorinic acid is the first stable intermediate in the biosynthesis of sterigmatocystin and is converted into averantin (AVN) by the ketoreductase stcE which reduces the hexanoate ketone to an alcohol. Averantin is then oxidized into 5'-hydroxyaverantin (HAVN) by the cytochrome P450 monooxygenase stcF. 5'-hydroxyaverantin is further converted to 5'-oxyaverantin (OAVN) by the 5'-hydroxyaverantin dehydrogenase stcG. The next step is the conversion of OAVN into averufin (AVF) which is catalyzed by a yet to be identified enzyme. The cytochrome P450 monooxygenase stcB and the flavin-binding monooxygenase stcW are both required for the conversion of averufin to 1-hydroxyversicolorone. The esterase stcI probably catalyzes the formation of versiconal hemiacetal acetate from 1-hydroxyversicolorone. The oxydoreductase stcN then probably catalyzes the biosynthetic step from versiconal to versicolorin B (VERB). The next step is performed by the versicolorin B desaturase stcL to produce versicolorin A (VERA). The ketoreductase stcU and the cytochrome P450 monooxygenase stcS are involved in the conversion of versicolorin A to demethylsterigmatocystin. The Baeyer-Villiger oxidas stcQ and the reductase stcR might be involved in the biosynthetic step from versicolorin A to demethylsterigmatocystin. The final step in the biosynthesis of sterigmatocystin is the methylation of demethylsterigmatocystin catalyzed by the methyltransferase stcP. The protein is Cytochrome P450 monooxygenase stcF of Emericella nidulans (strain FGSC A4 / ATCC 38163 / CBS 112.46 / NRRL 194 / M139) (Aspergillus nidulans).